The chain runs to 457 residues: Glycoprotein endo-alpha-1,2-mannosidase-like protein (457 aa).

Topologically, residues 1–8 (MARRRRRA) are cytoplasmic. Residues 9–29 (CIALFLVLLFAFGTLMGLRTL) form a helical; Signal-anchor for type II membrane protein membrane-spanning segment. Residues 30 to 457 (KAPDGLPALG…FIKEKEQWLM (428 aa)) are Lumenal-facing. The segment at 46–93 (PFERRPEGAPAPAARAPAAPAAPPPPPPPPRTADPGGSPGPAPAEAEP) is disordered. Positions 53–64 (GAPAPAARAPAA) are enriched in low complexity. Pro residues predominate over residues 65–87 (PAAPPPPPPPPRTADPGGSPGPA).

Belongs to the glycosyl hydrolase 99 family.

Its subcellular location is the golgi apparatus membrane. In Homo sapiens (Human), this protein is Glycoprotein endo-alpha-1,2-mannosidase-like protein (MANEAL).